Here is a 144-residue protein sequence, read N- to C-terminus: Protein MIX23 (144 aa).

Position 2 is an N-acetylalanine (alanine 2). Residues valine 82–glutamate 120 adopt a coiled-coil conformation. N6-acetyllysine is present on lysine 100.

It belongs to the MIX23 family.

The protein is Protein MIX23 of Mus musculus (Mouse).